Here is a 259-residue protein sequence, read N- to C-terminus: Indole-diterpene biosynthesis cluster protein S (259 aa).

Helical transmembrane passes span 5-25 (EASGWGFSLLQILLVLAGMVW), 64-84 (WFALHLFLYTTQLVGLSAIIL), 87-107 (VYLIRMLGLSTALPLISLWVL), 134-154 (VLWFTGLAHVASFLVATAASF), and 221-241 (LGAGLLARLFFVSLIAGPAAG).

It belongs to the ltmS family.

The protein localises to the membrane. Part of the gene cluster that mediates the biosynthesis of paspalitrems, indole-diterpene (IDT) mycotoxins that are potent tremorgens in mammals. The geranylgeranyl diphosphate (GGPP) synthase idtG is proposed to catalyze the first step in IDT biosynthesis via catalysis of a series of iterative condensations of isopentenyl diphosphate (IPP) with dimethylallyl diphosphate (DMAPP), geranyl diphosphate (GPP), and farnesyl diphosphate (FPP), to form GGPP. Condensation of indole-3-glycerol phosphate with GGPP by the prenyltransferase idtC then forms 3-geranylgeranylindole (3-GGI). Epoxidation of the two terminal alkenes of the geranylgeranyl moiety by the FAD-dependent monooxygenase idtM, and cyclization by the terpene cyclase idtB then leads to the production of paspaline. The cytochrome P450 monooxygenase idtP then catalyzes oxidative elimination of the pendant methyl group at C-12 of paspaline and generates the C-10 ketone to yield 13-desoxypaxilline. The cytochrome P450 monooxygenase idtQ may catalyze the C-13 oxidation of 13-desoxypaxilline to afford paxilline. Considering that both paspalicine and paxilline were detected in C.paspali, idtQ also catalyzes the formation of paspalinine from 13-desoxypaxilline via paspalicine as an intermediate. Finally, the alpha-prenyltransferase idtF prenylates paspalinine at the C-20 or the C-21 positions to yield paspalitrems A and C, respectively. The hydroxylation of paspalitrem A at C-32 by a still unknown oxidase affords paspalitrem B. This Claviceps paspali (Rye ergot fungus) protein is Indole-diterpene biosynthesis cluster protein S.